The primary structure comprises 527 residues: Probable glucomannan 4-beta-mannosyltransferase 9 (527 aa).

A helical transmembrane segment spans residues 37–59 (AMSVMLFVEKVYMSVVLVGVHLF). The active site involves D131. D190 and D192 together coordinate substrate. D284 is a catalytic residue. The next 4 helical transmembrane spans lie at 363–383 (IIGH…TVLI), 399–419 (IVTI…IFWV), 478–498 (ALEL…IAYG), and 505–525 (FLFL…GTIV).

The protein belongs to the glycosyltransferase 2 family. Plant cellulose synthase-like A subfamily.

Its subcellular location is the golgi apparatus membrane. The enzyme catalyses GDP-mannose + (glucomannan)n = GDP + (glucomannan)n+1.. Probable mannan synthase which consists of a 4-beta-mannosyltransferase activity on mannan using GDP-mannose. The beta-1,4-mannan product is the backbone for galactomannan synthesis by galactomannan galactosyltransferase. Galactomannan is a noncellulosic polysaccharides of plant cell wall. This is Probable glucomannan 4-beta-mannosyltransferase 9 from Oryza sativa subsp. japonica (Rice).